Reading from the N-terminus, the 179-residue chain is MVVEVLRLGHRGDRDKRISTHVALTARALGADKIIFTTEDEHVENSVKKVVESWGGNFEFVVEKHWRKYIREFKKRGIVVHLTMYGANINEIMPEIREISRDKDILVIVGAEKVPKEVYELADYNVSVGNQPHSEVAALAIFLDRLFEGKTLYRDFEDAKIKIVPSKDGKVVIREKQNK.

Residues leucine 82, 110 to 114 (GAEKV), and 128 to 135 (VGNQPHSE) each bind S-adenosyl-L-methionine.

Belongs to the aTrm56 family. In terms of assembly, homodimer.

The protein resides in the cytoplasm. The enzyme catalyses cytidine(56) in tRNA + S-adenosyl-L-methionine = 2'-O-methylcytidine(56) in tRNA + S-adenosyl-L-homocysteine + H(+). Functionally, specifically catalyzes the AdoMet-dependent 2'-O-ribose methylation of cytidine at position 56 in tRNAs. This is tRNA (cytidine(56)-2'-O)-methyltransferase from Methanocaldococcus jannaschii (strain ATCC 43067 / DSM 2661 / JAL-1 / JCM 10045 / NBRC 100440) (Methanococcus jannaschii).